The sequence spans 188 residues: ATP-dependent protease subunit HslV (188 aa).

The active site involves T7. Residues G162, C165, and S168 each contribute to the Na(+) site.

It belongs to the peptidase T1B family. HslV subfamily. A double ring-shaped homohexamer of HslV is capped on each side by a ring-shaped HslU homohexamer. The assembly of the HslU/HslV complex is dependent on binding of ATP.

Its subcellular location is the cytoplasm. It carries out the reaction ATP-dependent cleavage of peptide bonds with broad specificity.. Allosterically activated by HslU binding. Protease subunit of a proteasome-like degradation complex believed to be a general protein degrading machinery. This Thiobacillus denitrificans (strain ATCC 25259 / T1) protein is ATP-dependent protease subunit HslV.